Reading from the N-terminus, the 332-residue chain is Phosphate acyltransferase (332 aa).

The protein belongs to the PlsX family. In terms of assembly, homodimer. Probably interacts with PlsY.

The protein resides in the cytoplasm. It carries out the reaction a fatty acyl-[ACP] + phosphate = an acyl phosphate + holo-[ACP]. It participates in lipid metabolism; phospholipid metabolism. Functionally, catalyzes the reversible formation of acyl-phosphate (acyl-PO(4)) from acyl-[acyl-carrier-protein] (acyl-ACP). This enzyme utilizes acyl-ACP as fatty acyl donor, but not acyl-CoA. The protein is Phosphate acyltransferase of Clostridium novyi (strain NT).